The following is a 337-amino-acid chain: Transaldolase (337 aa).

The short motif at 1–10 (MSSSPVKRQR) is the Nuclear localization signal element. Position 115 is an N6-acetyllysine (Lys115). Residue Lys142 is the Schiff-base intermediate with substrate of the active site. Lys219 is modified (N6-acetyllysine). Phosphoserine is present on residues Ser237 and Ser256. 3 positions are modified to N6-acetyllysine: Lys269, Lys286, and Lys321.

The protein belongs to the transaldolase family. Type 1 subfamily. As to quaternary structure, homodimer. Heterodimer with isoform 2. Interacts with KPNA1 and KPNA4.

The protein localises to the nucleus. It localises to the cytoplasm. The enzyme catalyses D-sedoheptulose 7-phosphate + D-glyceraldehyde 3-phosphate = D-erythrose 4-phosphate + beta-D-fructose 6-phosphate. It functions in the pathway carbohydrate degradation; pentose phosphate pathway; D-glyceraldehyde 3-phosphate and beta-D-fructose 6-phosphate from D-ribose 5-phosphate and D-xylulose 5-phosphate (non-oxidative stage): step 2/3. Functionally, catalyzes the rate-limiting step of the non-oxidative phase in the pentose phosphate pathway. Catalyzes the reversible conversion of sedheptulose-7-phosphate and D-glyceraldehyde 3-phosphate into erythrose-4-phosphate and beta-D-fructose 6-phosphate. Not only acts as a pentose phosphate pathway enzyme, but also affects other metabolite pathways by altering its subcellular localization between the nucleus and the cytoplasm. The protein is Transaldolase of Homo sapiens (Human).